A 287-amino-acid chain; its full sequence is Isopentenyl-diphosphate Delta-isomerase I (287 aa).

Residues 105–257 (LLHRAFSVFL…GVKLSPWFRL (153 aa)) enclose the Nudix hydrolase domain. Catalysis depends on residues Cys-142 and Tyr-207.

It belongs to the IPP isomerase type 1 family.

It catalyses the reaction isopentenyl diphosphate = dimethylallyl diphosphate. It functions in the pathway isoprenoid biosynthesis; dimethylallyl diphosphate biosynthesis; dimethylallyl diphosphate from isopentenyl diphosphate: step 1/1. It participates in porphyrin-containing compound metabolism; chlorophyll biosynthesis. Its function is as follows. Catalyzes the 1,3-allylic rearrangement of the homoallylic substrate isopentenyl (IPP) to its highly electrophilic allylic isomer, dimethylallyl diphosphate (DMAPP). The polypeptide is Isopentenyl-diphosphate Delta-isomerase I (IPI1) (Clarkia breweri (Fairy fans)).